The sequence spans 188 residues: Adenylate kinase (188 aa).

12 to 17 lines the ATP pocket; sequence GVGKGT. The segment at 32–61 is NMP; the sequence is STGDIFRSAMANHTELGDKAKSFMDAGNLV. AMP is bound by residues threonine 33, arginine 38, 59–61, 89–92, and glutamine 96; these read NLV and GYPR. The tract at residues 130 to 136 is LID; the sequence is GRGREDD. Arginine 131 provides a ligand contact to ATP. 2 residues coordinate AMP: arginine 133 and arginine 144. Glycine 172 serves as a coordination point for ATP.

This sequence belongs to the adenylate kinase family. As to quaternary structure, monomer.

The protein resides in the cytoplasm. It catalyses the reaction AMP + ATP = 2 ADP. It participates in purine metabolism; AMP biosynthesis via salvage pathway; AMP from ADP: step 1/1. Its function is as follows. Catalyzes the reversible transfer of the terminal phosphate group between ATP and AMP. Plays an important role in cellular energy homeostasis and in adenine nucleotide metabolism. The sequence is that of Adenylate kinase from Oenococcus oeni (strain ATCC BAA-331 / PSU-1).